Here is a 419-residue protein sequence, read N- to C-terminus: Elongation factor Tu, chloroplastic (419 aa).

The 205-residue stretch at 10–214 folds into the tr-type G domain; it reads KPHVNIGTIG…AVDSYIPTPK (205 aa). The interval 19-26 is G1; sequence GHVDHGKT. 19 to 26 serves as a coordination point for GTP; that stretch reads GHVDHGKT. Thr-26 provides a ligand contact to Mg(2+). Residues 60-64 are G2; sequence GITIN. The tract at residues 81 to 84 is G3; that stretch reads DCPG. GTP-binding positions include 81 to 85 and 136 to 139; these read DCPGH and NKED. The segment at 136 to 139 is G4; that stretch reads NKED. The segment at 174 to 176 is G5; it reads SAL.

The protein belongs to the TRAFAC class translation factor GTPase superfamily. Classic translation factor GTPase family. EF-Tu/EF-1A subfamily.

The protein localises to the plastid. The protein resides in the chloroplast. It carries out the reaction GTP + H2O = GDP + phosphate + H(+). GTP hydrolase that promotes the GTP-dependent binding of aminoacyl-tRNA to the A-site of ribosomes during protein biosynthesis. The polypeptide is Elongation factor Tu, chloroplastic (tufA) (Chara vulgaris (Common stonewort)).